A 121-amino-acid chain; its full sequence is Nitrogenase-stabilizing/protective protein NifW (121 aa).

This sequence belongs to the NifW family. As to quaternary structure, homotrimer; associates with NifD.

Functionally, may protect the nitrogenase Fe-Mo protein from oxidative damage. The protein is Nitrogenase-stabilizing/protective protein NifW of Methylacidiphilum infernorum (isolate V4) (Methylokorus infernorum (strain V4)).